The chain runs to 102 residues: Large ribosomal subunit protein bL21 (102 aa).

This sequence belongs to the bacterial ribosomal protein bL21 family. Part of the 50S ribosomal subunit. Contacts protein L20.

Its function is as follows. This protein binds to 23S rRNA in the presence of protein L20. The protein is Large ribosomal subunit protein bL21 of Cutibacterium acnes (strain DSM 16379 / KPA171202) (Propionibacterium acnes).